Reading from the N-terminus, the 344-residue chain is Putative transport protein sll0060 (344 aa).

8 consecutive transmembrane segments (helical) span residues 14-34 (LWIG…LQIL), 41-61 (LRIF…VRWL), 72-92 (AVAL…LLVI), 155-175 (LINL…IFIM), 215-235 (IGQA…LSIF), 237-257 (VPLA…PFGG), 262-282 (VLIS…VLAI), and 310-330 (ILLS…LVAI).

It belongs to the autoinducer-2 exporter (AI-2E) (TC 2.A.86) family.

Its subcellular location is the cell membrane. The chain is Putative transport protein sll0060 from Synechocystis sp. (strain ATCC 27184 / PCC 6803 / Kazusa).